Here is a 383-residue protein sequence, read N- to C-terminus: Xylose/arabinose import ATP-binding protein XacJ (383 aa).

Positions 4 to 235 (IQLTDLTKRF…PNNLFVAEFI (232 aa)) constitute an ABC transporter domain. An ATP-binding site is contributed by 36-43 (GPSGCGKS).

This sequence belongs to the ABC transporter superfamily. Carbohydrate uptake transporter-1 (CUT1) (TC 3.A.1.1) family. As to quaternary structure, the complex is composed of two ATP-binding proteins (XacJ and XacK), two transmembrane proteins (XacH and XacI) and a solute-binding protein (XacG).

It is found in the cell membrane. The enzyme catalyses D-xylose(out) + ATP + H2O = D-xylose(in) + ADP + phosphate + H(+). It carries out the reaction L-arabinose(out) + ATP + H2O = L-arabinose(in) + ADP + phosphate + H(+). In terms of biological role, part of the ABC transporter complex XacGHIJK involved in the uptake of xylose and arabinose. Responsible for energy coupling to the transport system. The polypeptide is Xylose/arabinose import ATP-binding protein XacJ (Haloferax volcanii (strain ATCC 29605 / DSM 3757 / JCM 8879 / NBRC 14742 / NCIMB 2012 / VKM B-1768 / DS2) (Halobacterium volcanii)).